The following is a 194-amino-acid chain: Peptidyl-tRNA hydrolase (194 aa).

TRNA is bound at residue Tyr-17. The active-site Proton acceptor is the His-22. Phe-68, Asn-70, and Asn-116 together coordinate tRNA.

This sequence belongs to the PTH family. As to quaternary structure, monomer.

The protein resides in the cytoplasm. The enzyme catalyses an N-acyl-L-alpha-aminoacyl-tRNA + H2O = an N-acyl-L-amino acid + a tRNA + H(+). Hydrolyzes ribosome-free peptidyl-tRNAs (with 1 or more amino acids incorporated), which drop off the ribosome during protein synthesis, or as a result of ribosome stalling. Its function is as follows. Catalyzes the release of premature peptidyl moieties from peptidyl-tRNA molecules trapped in stalled 50S ribosomal subunits, and thus maintains levels of free tRNAs and 50S ribosomes. The chain is Peptidyl-tRNA hydrolase from Haemophilus ducreyi (strain 35000HP / ATCC 700724).